Reading from the N-terminus, the 290-residue chain is 4-hydroxybenzoate octaprenyltransferase (290 aa).

Helical transmembrane passes span 23–43, 46–66, 99–119, 141–161, 163–183, 212–232, 233–253, and 268–288; these read IGAL…TPGM, LWIL…GCVV, LFVV…AMTI, LPQV…FAAV, ESLP…AVAY, TLII…IGWL, NGLG…FVYQ, and AFMN…MSYW.

This sequence belongs to the UbiA prenyltransferase family. The cofactor is Mg(2+).

It localises to the cell inner membrane. It catalyses the reaction all-trans-octaprenyl diphosphate + 4-hydroxybenzoate = 4-hydroxy-3-(all-trans-octaprenyl)benzoate + diphosphate. It participates in cofactor biosynthesis; ubiquinone biosynthesis. Functionally, catalyzes the prenylation of para-hydroxybenzoate (PHB) with an all-trans polyprenyl group. Mediates the second step in the final reaction sequence of ubiquinone-8 (UQ-8) biosynthesis, which is the condensation of the polyisoprenoid side chain with PHB, generating the first membrane-bound Q intermediate 3-octaprenyl-4-hydroxybenzoate. The sequence is that of 4-hydroxybenzoate octaprenyltransferase from Salmonella typhi.